The primary structure comprises 241 residues: Small ribosomal subunit protein uS3 (241 aa).

Residues 39 to 109 (VRNYVNKNLS…PIRINVVEVA (71 aa)) enclose the KH type-2 domain. The interval 213–241 (ADEQPTNREPQQRRRQQQRRRQQFEDRSE) is disordered.

It belongs to the universal ribosomal protein uS3 family. In terms of assembly, part of the 30S ribosomal subunit. Forms a tight complex with proteins S10 and S14.

Functionally, binds the lower part of the 30S subunit head. Binds mRNA in the 70S ribosome, positioning it for translation. The polypeptide is Small ribosomal subunit protein uS3 (Acaryochloris marina (strain MBIC 11017)).